Reading from the N-terminus, the 220-residue chain is MTDKSTARKKITRIGIGGPVGSGKTAIIEVITPILIKRGIKPLIITNDIVTTEDAKQVKRTLKGILDEEKILGVETGACPHTAVREDPSMNIAAVEEMEERFPESDLIMIESGGDNLTLTFSPALADFYIYVIDVAEGEKIPRKNGPGLVQADILVINKIDLAPYVGASLDVMESDTKVVRGNRPYILTNCKTGQGIEELVDMIMRDFLFTHVQPEGEQA.

A GTP-binding site is contributed by 18 to 25 (GPVGSGKT).

The protein belongs to the SIMIBI class G3E GTPase family. UreG subfamily. As to quaternary structure, homodimer. UreD, UreF and UreG form a complex that acts as a GTP-hydrolysis-dependent molecular chaperone, activating the urease apoprotein by helping to assemble the nickel containing metallocenter of UreC. The UreE protein probably delivers the nickel.

It is found in the cytoplasm. Its function is as follows. Facilitates the functional incorporation of the urease nickel metallocenter. This process requires GTP hydrolysis, probably effectuated by UreG. The sequence is that of Urease accessory protein UreG from Yersinia pestis.